A 166-amino-acid chain; its full sequence is Small ribosomal subunit protein uS5 (166 aa).

Residues 11–74 (LDDNVVAINR…EAAKKNLITV (64 aa)) form the S5 DRBM domain.

Belongs to the universal ribosomal protein uS5 family. As to quaternary structure, part of the 30S ribosomal subunit. Contacts proteins S4 and S8.

In terms of biological role, with S4 and S12 plays an important role in translational accuracy. Located at the back of the 30S subunit body where it stabilizes the conformation of the head with respect to the body. This is Small ribosomal subunit protein uS5 from Lactiplantibacillus plantarum (strain ATCC BAA-793 / NCIMB 8826 / WCFS1) (Lactobacillus plantarum).